We begin with the raw amino-acid sequence, 181 residues long: UPF0398 protein LMOf2365_1918 (181 aa).

Belongs to the UPF0398 family.

The chain is UPF0398 protein LMOf2365_1918 from Listeria monocytogenes serotype 4b (strain F2365).